Here is a 1027-residue protein sequence, read N- to C-terminus: Protein translocase subunit SecA (1027 aa).

ATP is bound by residues Gln143, 161-165 (GEGKT), and Asp661. Positions 981–1027 (EESGTSNADNAGDNGPQTVIAEKKPGRNDLCPCGSGKKYKNCHGQQP) are disordered. Residues Cys1011, Cys1013, Cys1022, and His1023 each contribute to the Zn(2+) site.

Belongs to the SecA family. Monomer and homodimer. Part of the essential Sec protein translocation apparatus which comprises SecA, SecYEG and auxiliary proteins SecDF. Other proteins may also be involved. Requires Zn(2+) as cofactor.

The protein localises to the cell inner membrane. It is found in the cytoplasm. The enzyme catalyses ATP + H2O + cellular proteinSide 1 = ADP + phosphate + cellular proteinSide 2.. Functionally, part of the Sec protein translocase complex. Interacts with the SecYEG preprotein conducting channel. Has a central role in coupling the hydrolysis of ATP to the transfer of proteins into and across the cell membrane, serving as an ATP-driven molecular motor driving the stepwise translocation of polypeptide chains across the membrane. The sequence is that of Protein translocase subunit SecA from Chlorobium limicola (strain DSM 245 / NBRC 103803 / 6330).